Reading from the N-terminus, the 229-residue chain is MVYKILIVDDDQEILKLMKTALEMRNYEVATHQNISLPLDITDFQGFDLILLDIMMSNIEGTEICKRIRREISTPIIFVSAKDTEEDIINGLGIGGDDYITKPFSLKQLVAKVEANIKREERNKHAVHVFSEIRRDLGPITFYLEERRVCVNGQTIPLTCREYDILELLSQRTSKVYTREDIYDDVYDEYSNALFRSISEYIYQIRSKFAPYDINPIKTVRGLGYQWHG.

The region spanning 4 to 117 (KILIVDDDQE…QLVAKVEANI (114 aa)) is the Response regulatory domain. D53 is subject to 4-aspartylphosphate. The segment at residues 132–229 (EIRRDLGPIT…VRGLGYQWHG (98 aa)) is a DNA-binding region (ompR/PhoB-type).

Phosphorylated by NisK.

In terms of biological role, member of the two-component regulatory system NisK/NisR involved in the regulation of the biosynthesis of lantibiotic nisin. NisR may function as a regulatory protein. This is Nisin biosynthesis regulatory protein NisR (nisR) from Lactococcus lactis subsp. lactis (Streptococcus lactis).